The sequence spans 413 residues: Short-chain specific acyl-CoA dehydrogenase, mitochondrial (413 aa).

The N-terminal 24 residues, 1–24 (MAAALLARACGPVRGALWPRDCRR), are a transit peptide targeting the mitochondrion. Threonine 27 bears the Phosphothreonine mark. Lysine 51 bears the N6-acetyllysine; alternate mark. The residue at position 51 (lysine 51) is an N6-succinyllysine; alternate. Lysine 72 is subject to N6-acetyllysine. Lysine 129 carries the N6-acetyllysine; alternate modification. An N6-succinyllysine; alternate modification is found at lysine 129. Residues 152–161 (FALSEPGNGS) and 185–187 (WIT) contribute to the FAD site. Serine 161 is a binding site for substrate. Residue lysine 208 is modified to N6-acetyllysine. The residue at position 262 (lysine 262) is an N6-acetyllysine; alternate. The residue at position 262 (lysine 262) is an N6-succinyllysine; alternate. 269–272 (DMGR) is a binding site for substrate. Arginine 297 contributes to the FAD binding site. The residue at position 306 (lysine 306) is an N6-acetyllysine; alternate. An N6-succinyllysine; alternate modification is found at lysine 306. FAD is bound by residues glutamine 308 and 366–370 (QILGG). Residue glutamate 393 is the Proton acceptor of the active site. Residue glycine 394 coordinates substrate. 395–397 (TSE) lines the FAD pocket.

This sequence belongs to the acyl-CoA dehydrogenase family. In terms of assembly, homotetramer. It depends on FAD as a cofactor.

The protein localises to the mitochondrion matrix. The enzyme catalyses a short-chain 2,3-saturated fatty acyl-CoA + oxidized [electron-transfer flavoprotein] + H(+) = a short-chain (2E)-enoyl-CoA + reduced [electron-transfer flavoprotein]. The catalysed reaction is butanoyl-CoA + oxidized [electron-transfer flavoprotein] + H(+) = (2E)-butenoyl-CoA + reduced [electron-transfer flavoprotein]. It catalyses the reaction pentanoyl-CoA + oxidized [electron-transfer flavoprotein] + H(+) = (2E)-pentenoyl-CoA + reduced [electron-transfer flavoprotein]. It carries out the reaction hexanoyl-CoA + oxidized [electron-transfer flavoprotein] + H(+) = (2E)-hexenoyl-CoA + reduced [electron-transfer flavoprotein]. It functions in the pathway lipid metabolism; mitochondrial fatty acid beta-oxidation. Its function is as follows. Short-chain specific acyl-CoA dehydrogenase is one of the acyl-CoA dehydrogenases that catalyze the first step of mitochondrial fatty acid beta-oxidation, an aerobic process breaking down fatty acids into acetyl-CoA and allowing the production of energy from fats. The first step of fatty acid beta-oxidation consists in the removal of one hydrogen from C-2 and C-3 of the straight-chain fatty acyl-CoA thioester, resulting in the formation of trans-2-enoyl-CoA. Among the different mitochondrial acyl-CoA dehydrogenases, short-chain specific acyl-CoA dehydrogenase acts specifically on acyl-CoAs with saturated 4 to 6 carbons long primary chains. The protein is Short-chain specific acyl-CoA dehydrogenase, mitochondrial (ACADS) of Sus scrofa (Pig).